The chain runs to 89 residues: Small ribosomal subunit protein bS20 (89 aa).

Belongs to the bacterial ribosomal protein bS20 family.

Binds directly to 16S ribosomal RNA. The sequence is that of Small ribosomal subunit protein bS20 from Helicobacter pylori (strain P12).